Here is a 27-residue protein sequence, read N- to C-terminus: Toxin Bcg III 21.00 (27 aa).

The protein localises to the secreted. It is found in the nematocyst. Possible voltage-gated potassium channel (Kv) blocker. The sequence is that of Toxin Bcg III 21.00 from Bunodosoma cangicum (Sea anemone).